The sequence spans 437 residues: Magnetosome protein MamN (437 aa).

11 helical membrane passes run 26–46 (LAVL…GSYT), 53–73 (SVYF…ALLA), 95–115 (WILV…NSLV), 136–156 (VPVI…TMIG), 174–194 (FIAG…VFFE), 226–246 (LLSY…LAGP), 252–268 (GWIA…LGRF), 281–301 (DILF…VGIL), 320–340 (AILL…GTSA), 358–378 (AAWW…LPGA), and 416–436 (WGMP…AVLV).

This sequence belongs to the arsenite-antimonite (ArsB) efflux (TC 2.A.45) family.

The protein localises to the magnetosome membrane. Functionally, plays a role in biomineralization; might regulate pH in the magnetosome. This chain is Magnetosome protein MamN (mamN), found in Paramagnetospirillum magneticum (strain ATCC 700264 / AMB-1) (Magnetospirillum magneticum).